A 270-amino-acid chain; its full sequence is Large ribosomal subunit protein uL2c (270 aa).

Residues 221-245 (NPIDHPHGGGEGRAPIGRNQPKTPW) are disordered.

Belongs to the universal ribosomal protein uL2 family. Part of the 50S ribosomal subunit.

The protein resides in the plastid. This is Large ribosomal subunit protein uL2c (rpl2) from Cuscuta gronovii (Common dodder).